Consider the following 565-residue polypeptide: Hemagglutinin-neuraminidase (565 aa).

The Intravirion portion of the chain corresponds to 1-19; that stretch reads MVAEDAPVRGTCRVLFRTT. Residues 20–40 traverse the membrane as a helical segment; that stretch reads TLLFLCTLLSLSISILYESLI. Topologically, residues 41 to 565 are virion surface; the sequence is TQNQIMSQAG…VPFIRQVTLS (525 aa). 2 N-linked (GlcNAc...) asparagine; by host glycosylation sites follow: Asn110 and Asn139. 3 disulfide bridges follow: Cys161-Cys185, Cys175-Cys236, and Cys227-Cys240. The segment at 223-228 is involved in neuraminidase activity; the sequence is NRKSCS. A glycan (N-linked (GlcNAc...) asparagine; by host) is linked at Asn267. Cystine bridges form between Cys333–Cys454, Cys365–Cys375, and Cys448–Cys458. Asn504 carries N-linked (GlcNAc...) asparagine; by host glycosylation. The cysteines at positions 528 and 539 are disulfide-linked.

This sequence belongs to the paramyxoviruses hemagglutinin-neuraminidase family. Homotetramer; composed of disulfide-linked homodimers. Interacts with F protein trimer.

It localises to the virion membrane. The protein localises to the host cell membrane. The enzyme catalyses Hydrolysis of alpha-(2-&gt;3)-, alpha-(2-&gt;6)-, alpha-(2-&gt;8)- glycosidic linkages of terminal sialic acid residues in oligosaccharides, glycoproteins, glycolipids, colominic acid and synthetic substrates.. In terms of biological role, attaches the virus to sialic acid-containing cell receptors and thereby initiating infection. Binding of HN protein to the receptor induces a conformational change that allows the F protein to trigger virion/cell membranes fusion. Neuraminidase activity ensures the efficient spread of the virus by dissociating the mature virions from the neuraminic acid containing glycoproteins. The chain is Hemagglutinin-neuraminidase (HN) from Canis lupus familiaris (Dog).